The primary structure comprises 148 residues: 3-dehydroquinate dehydratase (148 aa).

The Proton acceptor role is filled by Tyr-23. The substrate site is built by Asn-75, His-81, and Asp-88. His-101 (proton donor) is an active-site residue. Substrate-binding positions include 102 to 103 and Arg-112; that span reads LS.

The protein belongs to the type-II 3-dehydroquinase family. Homododecamer.

It carries out the reaction 3-dehydroquinate = 3-dehydroshikimate + H2O. It functions in the pathway metabolic intermediate biosynthesis; chorismate biosynthesis; chorismate from D-erythrose 4-phosphate and phosphoenolpyruvate: step 3/7. Functionally, catalyzes a trans-dehydration via an enolate intermediate. The protein is 3-dehydroquinate dehydratase of Xylella fastidiosa (strain 9a5c).